A 231-amino-acid chain; its full sequence is Superoxide dismutase [Mn] 1, mitochondrial (231 aa).

The N-terminal 29 residues, 1-29, are a transit peptide targeting the mitochondrion; that stretch reads MAIRCVASRKTLAGLKETSSRLLRIRGIQ. Positions 55 and 103 each coordinate Mn(2+). Phosphoserine is present on serine 124. Positions 192 and 196 each coordinate Mn(2+).

Belongs to the iron/manganese superoxide dismutase family. Homotetramer. Mn(2+) is required as a cofactor.

It is found in the mitochondrion matrix. It catalyses the reaction 2 superoxide + 2 H(+) = H2O2 + O2. Activated by MTM1. In terms of biological role, destroys superoxide anion radicals which are normally produced within the cells and which are toxic to biological systems. The protein is Superoxide dismutase [Mn] 1, mitochondrial (MSD1) of Arabidopsis thaliana (Mouse-ear cress).